Consider the following 368-residue polypeptide: Peptide chain release factor 2 (368 aa).

The segment at 36 to 56 is disordered; the sequence is EAQAGDPSLWDDPDHAQKVTS. An N5-methylglutamine modification is found at Gln-250.

Belongs to the prokaryotic/mitochondrial release factor family. In terms of processing, methylated by PrmC. Methylation increases the termination efficiency of RF2.

Its subcellular location is the cytoplasm. Functionally, peptide chain release factor 2 directs the termination of translation in response to the peptide chain termination codons UGA and UAA. This Corynebacterium aurimucosum (strain ATCC 700975 / DSM 44827 / CIP 107346 / CN-1) (Corynebacterium nigricans) protein is Peptide chain release factor 2.